Reading from the N-terminus, the 119-residue chain is Protein MRP-126 (119 aa).

2 consecutive EF-hand domains span residues 23–58 (DVFHQYSRREGDKDTLTRKELKLLIEKQLANYLKHV) and 59–94 (KNQVSIDQIFKDLDNNKDQQLSFGEVMLLIIRVTVA). The Ca(2+) site is built by Thr37, Glu42, Asp72, Asn74, Asp76, Gln78, and Glu83.

This sequence belongs to the S-100 family. As to expression, expressed in v-myb-transformed myelomonocytic cells.

In Gallus gallus (Chicken), this protein is Protein MRP-126.